Here is a 752-residue protein sequence, read N- to C-terminus: MAPAVAVVAAAAAFPFRLFSAEARRNTKGSRSKRGSARPLKPSPPPRPSASSSAAGGGGATTFTRLPLRNAPASVEVTLDRFPTANPEPRASTFTRRNGERLGDDEEDEEEEEDEVELGLRGATTFARLPLRDSPDGGDLTIGHFDAGVAPQEGLRSRAISRQLVEHLDDVEEEEEEQVVSRLDIFEGAKGREARAFLPDEDDEDDDVVVFDPEYDGYSDDEEFVATAVEQSPRGDAIAVAELEKLKYDNDDDDDDDDEVVVFHPDDDEEVDVFEDYDDDEEEETKEKGVPAVMRCFDTAKIYAKAGDGGNGVVAFRREKYVPLGGPSGGDGGRGGNVFVEVDGDMNSLLPFRKSVHFRAGRGAHGQGRQQAGAKGDDVVVKVPPGTVVRSAAGDVELLELMRPGQRALLLPGGRGGRGNAAFKSGTNKAPRIAEKGEKGPEMWIDLELKLVADVGIVGAPNAGKSTLLTAISAAKPTIANYPFTTLLPNLGVVSLDFDATMVVADLPGLLEGAHRGYGLGHEFLRHSERCSVLVHVVDGSGEQPEYEFEAVRLELELFSPSLVDKPYIVVYNKMDLPEASERWNKFQEKLQAEGIEPYCISAMNRQGTEDVVLAAYKVLQKDRQRMKDDEEWNGPENLNHVADAIKRERRAPMNEFEIFHDKGTNTWNVVGAGIERFVQMTNWQYSESLKRFQHALEACGVNKTLIKRGVKEGDTVVVGEMEMVWTDEPSKTRSSKTMNSKDDSVRWPEFG.

The transit peptide at 1-90 (MAPAVAVVAA…RFPTANPEPR (90 aa)) directs the protein to the chloroplast. Residues 19–121 (FSAEARRNTK…EEDEVELGLR (103 aa)) form a disordered region. The span at 26 to 36 (NTKGSRSKRGS) shows a compositional bias: basic residues. Acidic residues predominate over residues 103-117 (GDDEEDEEEEEDEVE). The 159-residue stretch at 294-452 (MRCFDTAKIY…MWIDLELKLV (159 aa)) folds into the Obg domain. An OBG-type G domain is found at 453 to 621 (ADVGIVGAPN…VVLAAYKVLQ (169 aa)). GTP contacts are provided by residues 459–466 (GAPNAGKS), 484–488 (FTTLL), 506–509 (DLPG), 573–576 (NKMD), and 602–604 (SAM). 2 residues coordinate Mg(2+): Ser466 and Thr486. The OCT domain occupies 649 to 728 (ERRAPMNEFE…VGEMEMVWTD (80 aa)). The disordered stretch occupies residues 728-752 (DEPSKTRSSKTMNSKDDSVRWPEFG). Positions 740 to 752 (NSKDDSVRWPEFG) are enriched in basic and acidic residues.

The protein belongs to the TRAFAC class OBG-HflX-like GTPase superfamily. OBG GTPase family. The cofactor is Mg(2+).

It is found in the plastid. The protein resides in the chloroplast. Its function is as follows. Probable GTP-binding protein that may play a role in chloroplast development. This is Probable GTP-binding protein OBGC1, chloroplastic (OBGC1) from Oryza sativa subsp. indica (Rice).